The sequence spans 378 residues: Spermidine/putrescine import ATP-binding protein PotA (378 aa).

The region spanning 18-248 (VQLAGIRKCF…PKNLFVAGFI (231 aa)) is the ABC transporter domain. 50–57 (GPSGCGKT) provides a ligand contact to ATP.

The protein belongs to the ABC transporter superfamily. Spermidine/putrescine importer (TC 3.A.1.11.1) family. As to quaternary structure, the complex is composed of two ATP-binding proteins (PotA), two transmembrane proteins (PotB and PotC) and a solute-binding protein (PotD).

Its subcellular location is the cell inner membrane. It catalyses the reaction ATP + H2O + polyamine-[polyamine-binding protein]Side 1 = ADP + phosphate + polyamineSide 2 + [polyamine-binding protein]Side 1.. In terms of biological role, part of the ABC transporter complex PotABCD involved in spermidine/putrescine import. Responsible for energy coupling to the transport system. This Shigella flexneri protein is Spermidine/putrescine import ATP-binding protein PotA.